The chain runs to 148 residues: Hemoglobin subunit beta (148 aa).

Residues 3-148 form the Globin domain; that stretch reads DWTDAERSAI…VVSALGRQYH (146 aa). Histidine 64 and histidine 93 together coordinate heme b.

It belongs to the globin family. As to quaternary structure, heterotetramer of two alpha chains and two beta chains. In terms of tissue distribution, red blood cells.

Its function is as follows. Involved in oxygen transport from gills to the various peripheral tissues. This is Hemoglobin subunit beta (hbb) from Oncorhynchus nerka (Sockeye salmon).